The chain runs to 153 residues: Mitotic-spindle organizing protein 2 (153 aa).

The segment at K80 to N153 is disordered. 2 stretches are compositionally biased toward polar residues: residues V81–P99 and K107–R133. The span at G134–N153 shows a compositional bias: low complexity.

This sequence belongs to the MOZART2 family. As to quaternary structure, part of the gamma-tubulin complex. Interacts with TUBG1.

It localises to the cytoplasm. Its subcellular location is the cytoskeleton. It is found in the microtubule organizing center. The protein resides in the centrosome. The protein localises to the spindle. This chain is Mitotic-spindle organizing protein 2 (mzt2), found in Danio rerio (Zebrafish).